Consider the following 398-residue polypeptide: tRNA-specific 2-thiouridylase MnmA (398 aa).

Residues 18–25 (AMSGGVDS) and leucine 44 contribute to the ATP site. The active-site Nucleophile is cysteine 112. A disulfide bridge links cysteine 112 with cysteine 213. Glycine 136 is an ATP binding site. The tract at residues 163–165 (RDQ) is interaction with tRNA. Cysteine 213 (cysteine persulfide intermediate) is an active-site residue.

It belongs to the MnmA/TRMU family.

Its subcellular location is the cytoplasm. It catalyses the reaction S-sulfanyl-L-cysteinyl-[protein] + uridine(34) in tRNA + AH2 + ATP = 2-thiouridine(34) in tRNA + L-cysteinyl-[protein] + A + AMP + diphosphate + H(+). Its function is as follows. Catalyzes the 2-thiolation of uridine at the wobble position (U34) of tRNA, leading to the formation of s(2)U34. The sequence is that of tRNA-specific 2-thiouridylase MnmA from Sinorhizobium fredii (strain NBRC 101917 / NGR234).